An 891-amino-acid chain; its full sequence is von Willebrand factor A domain-containing protein 7 (891 aa).

The N-terminal stretch at 1-28 (MLPVEVPLSHLGPPILLLLQLLLPPTSA) is a signal peptide. Asn-55 carries an N-linked (GlcNAc...) asparagine glycan. The segment at 238 to 273 (PKPPGKCSHGGHFDQSSSQPPRGGINKDSTSPSFSP) is disordered. A VWFA domain is found at 314 to 499 (ASSLSFVLDT…DVAAIVGESM (186 aa)).

As to expression, expressed at low level in many tissues.

The protein resides in the secreted. This is von Willebrand factor A domain-containing protein 7 (Vwa7) from Mus musculus (Mouse).